Reading from the N-terminus, the 428-residue chain is Enolase 2 (428 aa).

Q162 lines the (2R)-2-phosphoglycerate pocket. E204 acts as the Proton donor in catalysis. 3 residues coordinate Mg(2+): D241, E285, and D312. The (2R)-2-phosphoglycerate site is built by K337, R366, S367, and K388. The active-site Proton acceptor is K337.

This sequence belongs to the enolase family. Mg(2+) is required as a cofactor.

It localises to the cytoplasm. Its subcellular location is the secreted. The protein resides in the cell surface. The catalysed reaction is (2R)-2-phosphoglycerate = phosphoenolpyruvate + H2O. Its pathway is carbohydrate degradation; glycolysis; pyruvate from D-glyceraldehyde 3-phosphate: step 4/5. Functionally, catalyzes the reversible conversion of 2-phosphoglycerate (2-PG) into phosphoenolpyruvate (PEP). It is essential for the degradation of carbohydrates via glycolysis. The sequence is that of Enolase 2 from Lactobacillus johnsonii (strain CNCM I-12250 / La1 / NCC 533).